The sequence spans 503 residues: Cytochrome P450 71B6 (503 aa).

A helical membrane pass occupies residues 10–30 (TELLPWLLLLLIPPLLIFFLL). C446 serves as a coordination point for heme.

This sequence belongs to the cytochrome P450 family. Requires heme as cofactor.

Its subcellular location is the membrane. The sequence is that of Cytochrome P450 71B6 (CYP71B6) from Arabidopsis thaliana (Mouse-ear cress).